The sequence spans 140 residues: MPDMKPVQDIHAHHLGKWAENQALNILQANGFKLVIRNFHSRVGEIDLIVAKADELIFVEVKARTLGSYAAANEVLLVSQQRKIIKTAQYFLNRYPDYQQFYCRFDVICFDFPHKIAKTVQQDFSKLRYDQQWIENAFTL.

This sequence belongs to the UPF0102 family.

This Acinetobacter baylyi (strain ATCC 33305 / BD413 / ADP1) protein is UPF0102 protein ACIAD1132.